The sequence spans 170 residues: Urease accessory protein UreE (170 aa).

This sequence belongs to the UreE family.

It is found in the cytoplasm. Its function is as follows. Involved in urease metallocenter assembly. Binds nickel. Probably functions as a nickel donor during metallocenter assembly. This is Urease accessory protein UreE from Helicobacter pylori (strain J99 / ATCC 700824) (Campylobacter pylori J99).